The following is a 465-amino-acid chain: Lactaldehyde dehydrogenase (465 aa).

220-225 contacts NAD(+); the sequence is GSVEVG. Active-site residues include E240 and C274.

The protein belongs to the aldehyde dehydrogenase family. As to quaternary structure, homotetramer.

It carries out the reaction (S)-lactaldehyde + NAD(+) + H2O = (S)-lactate + NADH + 2 H(+). It functions in the pathway cofactor biosynthesis; coenzyme F420 biosynthesis. Its function is as follows. Involved in F420 biosynthesis through the oxidation of lactaldehyde to lactate. The polypeptide is Lactaldehyde dehydrogenase (Methanococcus aeolicus (strain ATCC BAA-1280 / DSM 17508 / OCM 812 / Nankai-3)).